Reading from the N-terminus, the 459-residue chain is Ribulose bisphosphate carboxylase (459 aa).

Asparagine 111 is a binding site for substrate. Lysine 166 (proton acceptor) is an active-site residue. Lysine 168 provides a ligand contact to substrate. Residues lysine 191, aspartate 193, and glutamate 194 each contribute to the Mg(2+) site. Lysine 191 bears the N6-carboxylysine mark. Histidine 287 serves as the catalytic Proton acceptor. 3 residues coordinate substrate: arginine 288, histidine 321, and serine 368.

This sequence belongs to the RuBisCO large chain family. Type II subfamily. As to quaternary structure, homodimer. Mg(2+) is required as a cofactor.

The catalysed reaction is 2 (2R)-3-phosphoglycerate + 2 H(+) = D-ribulose 1,5-bisphosphate + CO2 + H2O. The enzyme catalyses D-ribulose 1,5-bisphosphate + O2 = 2-phosphoglycolate + (2R)-3-phosphoglycerate + 2 H(+). RuBisCO catalyzes two reactions: the carboxylation of D-ribulose 1,5-bisphosphate, the primary event in carbon dioxide fixation, as well as the oxidative fragmentation of the pentose substrate. Both reactions occur simultaneously and in competition at the same active site. The chain is Ribulose bisphosphate carboxylase from Polaromonas naphthalenivorans (strain CJ2).